Reading from the N-terminus, the 421-residue chain is uncharacterized protein (421 aa).

CBS domains lie at 13 to 74 (MTKD…VRSL), 74 to 133 (LMYK…MKDT), 139 to 195 (MTRN…PKKK), and 217 to 274 (MNTP…KGAM).

This is an uncharacterized protein from Methanocaldococcus jannaschii (strain ATCC 43067 / DSM 2661 / JAL-1 / JCM 10045 / NBRC 100440) (Methanococcus jannaschii).